The primary structure comprises 440 residues: Xylose isomerase (440 aa).

Active-site residues include His-100 and Asp-103. Glu-231, Glu-267, His-270, Asp-295, Asp-306, Asp-308, and Asp-338 together coordinate Mg(2+).

The protein belongs to the xylose isomerase family. Homotetramer. The cofactor is Mg(2+).

Its subcellular location is the cytoplasm. It catalyses the reaction alpha-D-xylose = alpha-D-xylulofuranose. The polypeptide is Xylose isomerase (Burkholderia cenocepacia (strain HI2424)).